We begin with the raw amino-acid sequence, 442 residues long: tRNA modification GTPase MnmE (442 aa).

Residues Arg-22, Glu-79, and Lys-119 each contribute to the (6S)-5-formyl-5,6,7,8-tetrahydrofolate site. The 151-residue stretch at 216-366 folds into the TrmE-type G domain; sequence GIKTCLVGAP…LLEKIKSIFA (151 aa). Asn-226 is a binding site for K(+). Residues 226-231, 245-251, and 270-273 contribute to the GTP site; these read NSGKSS, SEIPGTT, and DTAG. Ser-230 lines the Mg(2+) pocket. Residues Ser-245, Ile-247, and Thr-250 each contribute to the K(+) site. Residue Thr-251 participates in Mg(2+) binding. Lys-442 contacts (6S)-5-formyl-5,6,7,8-tetrahydrofolate.

It belongs to the TRAFAC class TrmE-Era-EngA-EngB-Septin-like GTPase superfamily. TrmE GTPase family. Homodimer. Heterotetramer of two MnmE and two MnmG subunits. It depends on K(+) as a cofactor.

It localises to the cytoplasm. Its function is as follows. Exhibits a very high intrinsic GTPase hydrolysis rate. Involved in the addition of a carboxymethylaminomethyl (cmnm) group at the wobble position (U34) of certain tRNAs, forming tRNA-cmnm(5)s(2)U34. In Mesomycoplasma hyopneumoniae (strain 7448) (Mycoplasma hyopneumoniae), this protein is tRNA modification GTPase MnmE.